Here is a 308-residue protein sequence, read N- to C-terminus: 2-methylisocitrate lyase (308 aa).

54 to 56 (SGG) serves as a coordination point for substrate. Mg(2+)-binding residues include aspartate 94 and aspartate 96. Substrate-binding positions include 131-132 (CG), arginine 166, glutamate 196, 224-226 (NIT), arginine 255, and arginine 284.

Belongs to the isocitrate lyase/PEP mutase superfamily. Methylisocitrate lyase family. As to quaternary structure, homotetramer; dimer of dimers. Mg(2+) is required as a cofactor.

It carries out the reaction (2S,3R)-3-hydroxybutane-1,2,3-tricarboxylate = pyruvate + succinate. The protein operates within organic acid metabolism; propanoate degradation. Involved in the catabolism of short chain fatty acids (SCFA) via the 2-methylcitrate cycle I (propionate degradation route). Catalyzes the thermodynamically favored C-C bond cleavage reaction of (2R,3S)-2-methylisocitrate to yield pyruvate and succinate via an alpha-carboxy-carbanion intermediate. The protein is 2-methylisocitrate lyase of Vibrio cholerae serotype O1 (strain ATCC 39315 / El Tor Inaba N16961).